Reading from the N-terminus, the 318-residue chain is WRKY transcription factor 28 (318 aa).

Polar residues-rich tracts occupy residues Ser-74–Gln-84 and Arg-106–Ser-115. The tract at residues Ser-74–Pro-158 is disordered. 2 stretches are compositionally biased toward basic and acidic residues: residues Glu-116 to Lys-126 and Lys-148 to Pro-158. The WRKY DNA-binding region spans Ser-166–Pro-231.

It belongs to the WRKY group II-c family.

It localises to the nucleus. Functionally, transcription factor. Interacts specifically with the W box (5'-(T)TGAC[CT]-3'), a frequently occurring elicitor-responsive cis-acting element. This Arabidopsis thaliana (Mouse-ear cress) protein is WRKY transcription factor 28 (WRKY28).